The following is a 352-amino-acid chain: Glycerol-1-phosphate dehydrogenase [NAD(P)+] (352 aa).

NAD(+) contacts are provided by residues glycine 98–aspartate 102 and threonine 120–serine 123. Aspartate 125 is a substrate binding site. Residue serine 129 coordinates NAD(+). Substrate is bound at residue aspartate 172. 2 residues coordinate Zn(2+): aspartate 172 and histidine 252. Histidine 256 serves as a coordination point for substrate. Position 268 (histidine 268) interacts with Zn(2+).

This sequence belongs to the glycerol-1-phosphate dehydrogenase family. It depends on Zn(2+) as a cofactor.

It is found in the cytoplasm. It catalyses the reaction sn-glycerol 1-phosphate + NAD(+) = dihydroxyacetone phosphate + NADH + H(+). The catalysed reaction is sn-glycerol 1-phosphate + NADP(+) = dihydroxyacetone phosphate + NADPH + H(+). Its pathway is membrane lipid metabolism; glycerophospholipid metabolism. Functionally, catalyzes the NAD(P)H-dependent reduction of dihydroxyacetonephosphate (DHAP or glycerone phosphate) to glycerol 1-phosphate (G1P). The G1P thus generated is used as the glycerophosphate backbone of phospholipids in the cellular membranes of Archaea. This is Glycerol-1-phosphate dehydrogenase [NAD(P)+] from Haloarcula marismortui (strain ATCC 43049 / DSM 3752 / JCM 8966 / VKM B-1809) (Halobacterium marismortui).